The following is a 375-amino-acid chain: MRSHHRHFSSYVSFILFLFLFFISFSSSTSKLEPAKSEPKRKHSVSAILVFGDSTVDPGNNNYIDTVFKCNFPPYGLDFRNKTPTGRFCNGRLVTDFIASYIGVKENVPPYLDPNLGINELISGVSFASAGSGYDPLTPTITNVIDIPTQLEYFREYKRKLEGKMGKQEMEKHIEEAMFCVSAGTNDFVINYFTIPIRRKTFTIEAYQQFVISNLKQFIQGLWKEGARKITVAGLPPIGCLPIVITLFSGEALTNRRCIDRFSTVATNYNFLLQKQLALMQVGLAHLGSKIFYLDVYNPVYEVIRDPRKFGFEEVFSGCCGSGYLEASFLCNPKSYVCPNTSAYVFFDSIHPSEKTYFSLFRSLRPIYDSILGSF.

Positions 1 to 28 (MRSHHRHFSSYVSFILFLFLFFISFSSS) are cleaved as a signal peptide. The active-site Nucleophile is serine 54. Asparagine 340 is a glycosylation site (N-linked (GlcNAc...) asparagine). Residues aspartate 348 and histidine 351 contribute to the active site.

It belongs to the 'GDSL' lipolytic enzyme family.

Its subcellular location is the secreted. The protein is GDSL esterase/lipase At5g45960 of Arabidopsis thaliana (Mouse-ear cress).